Here is a 312-residue protein sequence, read N- to C-terminus: DNA-directed RNA polymerase subunit alpha (312 aa).

Positions 1–226 (MIEFEKPNIT…EHLDLFTDLT (226 aa)) are alpha N-terminal domain (alpha-NTD). Residues 244-312 (DHVLERTIEE…DLGLGLKNDK (69 aa)) are alpha C-terminal domain (alpha-CTD).

It belongs to the RNA polymerase alpha chain family. In terms of assembly, homodimer. The RNAP catalytic core consists of 2 alpha, 1 beta, 1 beta' and 1 omega subunit. When a sigma factor is associated with the core the holoenzyme is formed, which can initiate transcription.

The catalysed reaction is RNA(n) + a ribonucleoside 5'-triphosphate = RNA(n+1) + diphosphate. Functionally, DNA-dependent RNA polymerase catalyzes the transcription of DNA into RNA using the four ribonucleoside triphosphates as substrates. The sequence is that of DNA-directed RNA polymerase subunit alpha from Streptococcus gordonii (strain Challis / ATCC 35105 / BCRC 15272 / CH1 / DL1 / V288).